The following is a 253-amino-acid chain: 5-oxoprolinase subunit A (253 aa).

Belongs to the LamB/PxpA family. Forms a complex composed of PxpA, PxpB and PxpC.

The enzyme catalyses 5-oxo-L-proline + ATP + 2 H2O = L-glutamate + ADP + phosphate + H(+). Its function is as follows. Catalyzes the cleavage of 5-oxoproline to form L-glutamate coupled to the hydrolysis of ATP to ADP and inorganic phosphate. The sequence is that of 5-oxoprolinase subunit A from Bacillus licheniformis (strain ATCC 14580 / DSM 13 / JCM 2505 / CCUG 7422 / NBRC 12200 / NCIMB 9375 / NCTC 10341 / NRRL NRS-1264 / Gibson 46).